Consider the following 875-residue polypeptide: Phosphoenolpyruvate carboxylase (875 aa).

Active-site residues include His137 and Lys542.

This sequence belongs to the PEPCase type 1 family. Requires Mg(2+) as cofactor.

It carries out the reaction oxaloacetate + phosphate = phosphoenolpyruvate + hydrogencarbonate. Forms oxaloacetate, a four-carbon dicarboxylic acid source for the tricarboxylic acid cycle. This is Phosphoenolpyruvate carboxylase from Pseudomonas putida (strain GB-1).